Reading from the N-terminus, the 327-residue chain is Tetraacyldisaccharide 4'-kinase (327 aa).

54-61 (TTGGTGKT) is an ATP binding site. Positions 78 to 106 (PHILSRGHGGRERGPIGVNPNRSTPRDVG) are disordered.

Belongs to the LpxK family.

It carries out the reaction a lipid A disaccharide + ATP = a lipid IVA + ADP + H(+). It functions in the pathway glycolipid biosynthesis; lipid IV(A) biosynthesis; lipid IV(A) from (3R)-3-hydroxytetradecanoyl-[acyl-carrier-protein] and UDP-N-acetyl-alpha-D-glucosamine: step 6/6. Transfers the gamma-phosphate of ATP to the 4'-position of a tetraacyldisaccharide 1-phosphate intermediate (termed DS-1-P) to form tetraacyldisaccharide 1,4'-bis-phosphate (lipid IVA). In Gluconobacter oxydans (strain 621H) (Gluconobacter suboxydans), this protein is Tetraacyldisaccharide 4'-kinase.